We begin with the raw amino-acid sequence, 266 residues long: MMFATNFFVTSIILLFILIFLASAIKIVKEYERAVIFRLGRVVGARGPGLFFIIPIFEKAVIVDLRTQVLDVPVQETITKDNVPVRVNAVVYFRVVDPVKAVTQVKNYIMATSQISQTTLRSVIGQAHLDELLSERDKLNMQLQRIIDEATDPWGIKVTAVEIKDVELPAGMQKAMARQAEAERERRARITLAEAERQAAEKLREAAEIISEHPMALQLRTLQTISDVAGDKSNVIVLMLPMEMLKLFKSLSDAAEAYMKKKEEEK.

A helical transmembrane segment spans residues 7-27 (FFVTSIILLFILIFLASAIKI). 2 coiled-coil regions span residues 125-152 (GQAH…EATD) and 178-213 (RQAE…ISEH).

It belongs to the band 7/mec-2 family. In terms of assembly, homotrimer. Interacts with PH1510 and is cleaved by PH1510.

The protein localises to the membrane. This Pyrococcus horikoshii (strain ATCC 700860 / DSM 12428 / JCM 9974 / NBRC 100139 / OT-3) protein is Stomatin homolog PH1511.